Consider the following 461-residue polypeptide: Chromosomal replication initiator protein DnaA (461 aa).

The tract at residues 1-68 is domain I, interacts with DnaA modulators; sequence MINAWAQIEH…EKAAASVLGS (68 aa). Residues 68–118 form a domain II region; that stretch reads SVPTITVVSGEEPAAAPRPVQVPAQKRPAAARTSGAEQMGLPLHYASRSAD. Positions 119 to 336 are domain III, AAA+ region; sequence SIKWMHSFDE…SCLRNLLLKA (218 aa). ATP-binding residues include Gly162, Gly164, Lys165, and Thr166. Residues 337 to 461 form a domain IV, binds dsDNA region; it reads RLLNQQITMD…VERNGRIIHP (125 aa).

Belongs to the DnaA family. In terms of assembly, oligomerizes as a right-handed, spiral filament on DNA at oriC.

The protein localises to the cytoplasm. In terms of biological role, plays an essential role in the initiation and regulation of chromosomal replication. ATP-DnaA binds to the origin of replication (oriC) to initiate formation of the DNA replication initiation complex once per cell cycle. Binds the DnaA box (a 9 base pair repeat at the origin) and separates the double-stranded (ds)DNA. Forms a right-handed helical filament on oriC DNA; dsDNA binds to the exterior of the filament while single-stranded (ss)DNA is stabiized in the filament's interior. The ATP-DnaA-oriC complex binds and stabilizes one strand of the AT-rich DNA unwinding element (DUE), permitting loading of DNA polymerase. After initiation quickly degrades to an ADP-DnaA complex that is not apt for DNA replication. Binds acidic phospholipids. In Oleidesulfovibrio alaskensis (strain ATCC BAA-1058 / DSM 17464 / G20) (Desulfovibrio alaskensis), this protein is Chromosomal replication initiator protein DnaA.